The sequence spans 258 residues: Histidine/lysine/arginine/ornithine transport ATP-binding protein HisP (258 aa).

In terms of domain architecture, ABC transporter spans 7 to 253; sequence LHVIDLHKRY…PQSPRLQQFL (247 aa). S41, G42, G44, K45, S46, and T47 together coordinate ATP.

Belongs to the ABC transporter superfamily. As to quaternary structure, the HisPMQJ complex is composed of two ATP-binding proteins (HisP), two transmembrane proteins (HisM and HisQ) and a solute-binding protein (HisJ). The HisPMQ-ArgT complex is composed of two ATP-binding proteins (HisP), two transmembrane proteins (HisM and HisQ) and a solute-binding protein (ArgT).

It is found in the cell inner membrane. It catalyses the reaction a polar amino acid(out) + ATP + H2O = a polar amino acid(in) + ADP + phosphate + H(+). The enzyme catalyses L-histidine(out) + ATP + H2O = L-histidine(in) + ADP + phosphate + H(+). It carries out the reaction L-lysine(out) + ATP + H2O = L-lysine(in) + ADP + phosphate + H(+). The catalysed reaction is L-arginine(out) + ATP + H2O = L-arginine(in) + ADP + phosphate + H(+). It catalyses the reaction L-ornithine(out) + ATP + H2O = L-ornithine(in) + ADP + phosphate + H(+). Its activity is regulated as follows. Isolated, soluble HisP has a very low ATPase activity. ATPase activity is slightly increased in the presence of HisM and HisQ, and strongly increased when HisJ is also present. Functionally, part of the ABC transporter complex HisPMQJ involved in histidine transport. Is also part of the ABC transporter complex HisPMQ-ArgT involved in lysine/arginine/ornithine transport. Shows ATPase activity. Responsible for energy coupling to the transport system. This is Histidine/lysine/arginine/ornithine transport ATP-binding protein HisP from Salmonella typhimurium (strain LT2 / SGSC1412 / ATCC 700720).